Here is a 435-residue protein sequence, read N- to C-terminus: AP-2 complex subunit mu (435 aa).

Phosphoserine is present on S45. The residue at position 156 (T156) is a Phosphothreonine. The 265-residue stretch at 170 to 434 (RNELFLDVLE…IGRSGIYETR (265 aa)) folds into the MHD domain. The a 1,2-diacyl-sn-glycero-3-phospho-(1D-myo-inositol-3,4,5-trisphosphate) site is built by K341, K345, and K354.

The protein belongs to the adaptor complexes medium subunit family. In terms of assembly, adaptor protein complex 2 (AP-2) is a heterotetramer composed of two large adaptins (alpha-type subunit AP2A1 or AP2A2 and beta-type subunit AP2B1), a medium adaptin (mu-type subunit AP2M1) and a small adaptin (sigma-type subunit AP2S1). Interacts with ATP6V1H and MEGF10. Interacts with EGFR and TTGN1. Interacts with F2R. Interacts with PIP5K1C; tyrosine phosphorylation of PIP5K1C weakens the interaction. Interacts with KIAA0319; required for clathrin-mediated endocytosis of KIAA0319. Interacts with DVL2 (via DEP domain). Interacts with KCNQ1; mediates estrogen-induced internalization via clathrin-coated vesicles. Interacts with P2RX4 (via internalization motif). Together with AP2A1 or AP2A2 and AP2B1, it interacts with ADAM10; this interaction facilitates ADAM10 endocytosis from the plasma membrane during long-term potentiation in hippocampal neurons. Probably interacts with ACE2 (via endocytic sorting signal motif); the interaction is inhibited by ACE2 phosphorylation. Interacts with RALBP1; the interaction is direct. Interacts with TMEM106B (via N-terminus). Phosphorylation at Thr-156 increases the affinity of the AP-2 complex for cargo membrane proteins during the initial stages of endocytosis.

Its subcellular location is the cell membrane. The protein localises to the membrane. It is found in the coated pit. In terms of biological role, component of the adaptor protein complex 2 (AP-2). Adaptor protein complexes function in protein transport via transport vesicles in different membrane traffic pathways. Adaptor protein complexes are vesicle coat components and appear to be involved in cargo selection and vesicle formation. AP-2 is involved in clathrin-dependent endocytosis in which cargo proteins are incorporated into vesicles surrounded by clathrin (clathrin-coated vesicles, CCVs) which are destined for fusion with the early endosome. The clathrin lattice serves as a mechanical scaffold but is itself unable to bind directly to membrane components. Clathrin-associated adaptor protein (AP) complexes which can bind directly to both the clathrin lattice and to the lipid and protein components of membranes are considered to be the major clathrin adaptors contributing the CCV formation. AP-2 also serves as a cargo receptor to selectively sort the membrane proteins involved in receptor-mediated endocytosis. AP-2 seems to play a role in the recycling of synaptic vesicle membranes from the presynaptic surface. AP-2 recognizes Y-X-X-[FILMV] (Y-X-X-Phi) and [ED]-X-X-X-L-[LI] endocytosis signal motifs within the cytosolic tails of transmembrane cargo molecules. AP-2 may also play a role in maintaining normal post-endocytic trafficking through the ARF6-regulated, non-clathrin pathway. During long-term potentiation in hippocampal neurons, AP-2 is responsible for the endocytosis of ADAM10. The AP-2 mu subunit binds to transmembrane cargo proteins; it recognizes the Y-X-X-Phi motifs. The surface region interacting with to the Y-X-X-Phi motif is inaccessible in cytosolic AP-2, but becomes accessible through a conformational change following phosphorylation of AP-2 mu subunit at Thr-156 in membrane-associated AP-2. The membrane-specific phosphorylation event appears to involve assembled clathrin which activates the AP-2 mu kinase AAK1. Plays a role in endocytosis of frizzled family members upon Wnt signaling. In Bos taurus (Bovine), this protein is AP-2 complex subunit mu (AP2M1).